The following is a 97-amino-acid chain: UPF0235 protein Aasi_0294 (97 aa).

Belongs to the UPF0235 family.

This Amoebophilus asiaticus (strain 5a2) protein is UPF0235 protein Aasi_0294.